The chain runs to 764 residues: Phosphoribosylformylglycinamidine synthase subunit PurL (764 aa).

Residue H57 is part of the active site. ATP is bound by residues Y60 and K104. Position 106 (E106) interacts with Mg(2+). Residues S107–H110 and R129 contribute to the substrate site. H108 functions as the Proton acceptor in the catalytic mechanism. D130 is a Mg(2+) binding site. Q258 serves as a coordination point for substrate. D286 lines the Mg(2+) pocket. E330–Q332 serves as a coordination point for substrate. 2 residues coordinate ATP: N518 and G555. Mg(2+) is bound at residue N556. A substrate-binding site is contributed by S558.

Belongs to the FGAMS family. In terms of assembly, monomer. Part of the FGAM synthase complex composed of 1 PurL, 1 PurQ and 2 PurS subunits.

The protein resides in the cytoplasm. The catalysed reaction is N(2)-formyl-N(1)-(5-phospho-beta-D-ribosyl)glycinamide + L-glutamine + ATP + H2O = 2-formamido-N(1)-(5-O-phospho-beta-D-ribosyl)acetamidine + L-glutamate + ADP + phosphate + H(+). It participates in purine metabolism; IMP biosynthesis via de novo pathway; 5-amino-1-(5-phospho-D-ribosyl)imidazole from N(2)-formyl-N(1)-(5-phospho-D-ribosyl)glycinamide: step 1/2. Functionally, part of the phosphoribosylformylglycinamidine synthase complex involved in the purines biosynthetic pathway. Catalyzes the ATP-dependent conversion of formylglycinamide ribonucleotide (FGAR) and glutamine to yield formylglycinamidine ribonucleotide (FGAM) and glutamate. The FGAM synthase complex is composed of three subunits. PurQ produces an ammonia molecule by converting glutamine to glutamate. PurL transfers the ammonia molecule to FGAR to form FGAM in an ATP-dependent manner. PurS interacts with PurQ and PurL and is thought to assist in the transfer of the ammonia molecule from PurQ to PurL. The protein is Phosphoribosylformylglycinamidine synthase subunit PurL of Nocardia farcinica (strain IFM 10152).